The primary structure comprises 449 residues: MNAALNQWKDTHAARLSQYSAVRVSGRVSAVRGILLECKIPAAKVGDLCEVSKADGSFLLAEIVGFTQECTLLSALGAPDGIQVGAPIRPLGIAHRIGVDDTLLGCVLDGFGRPLLGDCLGAFAGPDDRRDTLPVIADALPPTQRPRITRSLPTGIRAIDSAILLGEGQRVGLFAGAGCGKTTLMAELARNMDCDVIVFGLIGERGRELREFLDHELDETLRARSVLVCATSDRSSMERARAAFTATAIAEAFRARGQKVLLLLDSLTRFARAQREIGIASGEPLGRGGLPPSVYTLLPRLVERAGMSENGSITALYTVLIEQDSMNDPVADEVRSLLDGHIVLSRKLAERGHYPAIDVSASISRILSNVTGRDHQRANNRLRQLLAAYKQVEMLLRLGEYQAGADPVTDCAVQLNDAINAFLRQDLREPVPLQETLDGLLRITSQLPE.

178-183 (GCGKTT) is an ATP binding site.

It belongs to the ATPase alpha/beta chains family. T3SS ATPase subfamily. In terms of assembly, the core secretion machinery of the T3SS is composed of approximately 20 different proteins, including cytoplasmic components, a base, an export apparatus and a needle. This subunit is part of the cytosolic complex. Forms homododecamers.

It localises to the cytoplasm. The enzyme catalyses ATP + H2O + cellular proteinSide 1 = ADP + phosphate + cellular proteinSide 2.. In terms of biological role, ATPase component of the type III secretion system (T3SS), also called injectisome, which is used to inject bacterial effector proteins into eukaryotic host cells. Acts as a molecular motor to provide the energy that is required for the export of proteins. Required for type III secretion apparatus (T3SA) formation, proper protein secretion, host cell invasion and virulence. May play a critical role in T3SS substrate recognition, disassembly of the effector/chaperone complex and unfolding of the effector in an ATP-dependent manner prior to secretion. The sequence is that of Type 3 secretion system ATPase from Pseudomonas syringae pv. tomato (strain ATCC BAA-871 / DC3000).